A 506-amino-acid chain; its full sequence is Maturase K (506 aa).

The protein belongs to the intron maturase 2 family. MatK subfamily.

It is found in the plastid. The protein resides in the chloroplast. Usually encoded in the trnK tRNA gene intron. Probably assists in splicing its own and other chloroplast group II introns. In Austrosteenisia blackii (Blood vine), this protein is Maturase K.